The chain runs to 1705 residues: Homeobox-DDT domain protein RLT1 (1705 aa).

Disordered regions lie at residues 1–53 (MEMG…QLET), 118–167 (ELPA…EYET), 237–267 (HDPRPRRSHAAARSFHEQQSLDDPSSFTPNM), 296–322 (GPVPRSYVTPGHASRNCSTSQQDMPSP), and 352–414 (GVRK…RKEE). A DNA-binding region (homeobox) is located at residues 39–98 (VKPKRQMKTPFQLETLEKVYSEEKYPSEATRAELSEKLDLSDRQLQMWFCHRRLKDKKDG). Positions 136–159 (GSESGCSPYSNSRRNFASGSSSSR) are enriched in low complexity. Composition is skewed to polar residues over residues 253-265 (EQQSLDDPSSFTP) and 310-319 (RNCSTSQQDM). One can recognise a DDT domain in the interval 549–608 (DETVGNLLMVWRFLISFSDVLDLWPFTLDEFIQAFHDYDSRLLGEIHVTLLRSIIRDVED). The 70-residue stretch at 731–800 (GTVKFAAFHV…APSTYCVRAP (70 aa)) folds into the HTH HARE-type domain. Disordered stretches follow at residues 1028–1053 (TRERDSFDRDPSQLLDETKPLEDLSN), 1198–1229 (VNHSPTDSVSPSSSAISGSNSDSMETSTSIRV), 1441–1502 (PEDE…KAQS), 1561–1635 (PKSE…FVDY), and 1652–1705 (AIEE…SSDS). Residues 1201–1220 (SPTDSVSPSSSAISGSNSDS) are compositionally biased toward low complexity. Residues 1455 to 1465 (SPFKGKGPREQ) show a composition bias toward basic and acidic residues. Acidic residues-rich tracts occupy residues 1565–1574 (EVEEDEEEEE), 1611–1628 (VDDESDNSVGVESEDEDG), and 1669–1684 (GEDDAEMSESSEDDDV).

Interacts with CHR11 and CHR17. Interacts (via the DDT domain) with CHR11 (via C-terminus). In terms of tissue distribution, highly expressed in growing tissues such as inflorescence and flower meristems, young leaves and floral organs. Expressed in roots, rosette and cauline leaves, stems, flowers, inflorescences and siliques.

Its subcellular location is the nucleus. Functionally, transcriptional regulator required for the maintenance of the plant vegetative phase. In association with CHR11 or CHR17 may prevent the early activation of the vegetative-to-reproductive transition by regulating key genes that contribute to flower timing, such as FT, SEP1, SEP3, AGL8/FUL, SOC1 and FLC. The polypeptide is Homeobox-DDT domain protein RLT1 (Arabidopsis thaliana (Mouse-ear cress)).